The chain runs to 183 residues: Putative 3-methyladenine DNA glycosylase (183 aa).

Belongs to the DNA glycosylase MPG family.

The sequence is that of Putative 3-methyladenine DNA glycosylase from Rickettsia rickettsii (strain Iowa).